We begin with the raw amino-acid sequence, 281 residues long: 3-hydroxyanthranilate 3,4-dioxygenase (281 aa).

The interval 1-162 is domain A (catalytic); it reads MSGVTAIEIP…SNEFKTGKPG (162 aa). R45 is a binding site for O2. Positions 49, 55, and 93 each coordinate Fe cation. E55 is a binding site for substrate. Positions 97 and 107 each coordinate substrate. Positions 163 to 179 are linker; that stretch reads KGTFACNAPYEARWTDL. Positions 180 to 281 are domain B; it reads PVPINRKEFI…GFAITIRMPA (102 aa).

The protein belongs to the 3-HAO family. Fe(2+) serves as cofactor.

The protein localises to the cytoplasm. It carries out the reaction 3-hydroxyanthranilate + O2 = (2Z,4Z)-2-amino-3-carboxymuconate 6-semialdehyde. The protein operates within cofactor biosynthesis; NAD(+) biosynthesis; quinolinate from L-kynurenine: step 3/3. Functionally, catalyzes the oxidative ring opening of 3-hydroxyanthranilate to 2-amino-3-carboxymuconate semialdehyde, which spontaneously cyclizes to quinolinate. This Caenorhabditis elegans protein is 3-hydroxyanthranilate 3,4-dioxygenase (haao-1).